The chain runs to 159 residues: MAEQTEKAFLKQPKVFLSSKISGKGKRPGKGGNRFWKNIGLGFKTPREAIDGAYIDSKCPFTGTVSIRGRILAGTCHSAKMQRTIIVRRNYLHFVKKYQRYEKRHSNIPAHVSPCFRVKEGDHVIIGQCRPLSKTVRFNVLKVIPAGASAFGKKAFTGV.

Belongs to the universal ribosomal protein uS17 family.

The protein localises to the cytoplasm. The sequence is that of Small ribosomal subunit protein uS17x (RPS11C) from Arabidopsis thaliana (Mouse-ear cress).